We begin with the raw amino-acid sequence, 137 residues long: Hemoglobin subunit beta (137 aa).

The region spanning His3 to His137 is the Globin domain. Positions 54 and 83 each coordinate heme b.

This sequence belongs to the globin family. Heterotetramer of two alpha chains and two beta chains. As to expression, red blood cells.

Involved in oxygen transport from gills to the various peripheral tissues. In Mustelus griseus (Spotless smooth-hound), this protein is Hemoglobin subunit beta (HBB).